Consider the following 153-residue polypeptide: Cytochrome c-type biogenesis protein CcmE (153 aa).

The Cytoplasmic portion of the chain corresponds to 1 to 8 (MMTPRQRR). The helical; Signal-anchor for type II membrane protein transmembrane segment at 9–29 (MTWVALMVAGVSLAAFFALTA) threads the bilayer. The Periplasmic segment spans residues 30 to 153 (FQKNLLYFYT…PADYSEYRKK (124 aa)). Heme is bound by residues histidine 124 and tyrosine 128. Residues 134–153 (AESLKKNGGLPADYSEYRKK) are disordered.

It belongs to the CcmE/CycJ family.

It is found in the cell inner membrane. Its function is as follows. Heme chaperone required for the biogenesis of c-type cytochromes. Transiently binds heme delivered by CcmC and transfers the heme to apo-cytochromes in a process facilitated by CcmF and CcmH. The chain is Cytochrome c-type biogenesis protein CcmE from Methylococcus capsulatus (strain ATCC 33009 / NCIMB 11132 / Bath).